A 248-amino-acid chain; its full sequence is 2,3-bisphosphoglycerate-dependent phosphoglycerate mutase (248 aa).

Substrate-binding positions include 8 to 15 (RHGESTWN), 21 to 22 (TG), arginine 60, 87 to 90 (ERHY), lysine 98, 114 to 115 (RR), and 183 to 184 (GN). Residue histidine 9 is the Tele-phosphohistidine intermediate of the active site. Glutamate 87 (proton donor/acceptor) is an active-site residue.

The protein belongs to the phosphoglycerate mutase family. BPG-dependent PGAM subfamily.

It catalyses the reaction (2R)-2-phosphoglycerate = (2R)-3-phosphoglycerate. Its pathway is carbohydrate degradation; glycolysis; pyruvate from D-glyceraldehyde 3-phosphate: step 3/5. Catalyzes the interconversion of 2-phosphoglycerate and 3-phosphoglycerate. This is 2,3-bisphosphoglycerate-dependent phosphoglycerate mutase from Solibacter usitatus (strain Ellin6076).